A 587-amino-acid polypeptide reads, in one-letter code: 65-kDa microtubule-associated protein 1 (587 aa).

Coiled coils occupy residues 46–84 (QECL…TMSL), 151–181 (DESD…LRKV), 234–257 (LTLK…LIDL), 290–317 (ALAR…MKEI), and 461–489 (AMLD…VQEQ). The segment covering 474 to 494 (EEEKRRLREQKKVQEQPHVEQ) has biased composition (basic and acidic residues). The tract at residues 474-587 (EEEKRRLREQ…AADHQVPASP (114 aa)) is disordered. Ser503 carries the phosphoserine modification. Phosphothreonine is present on Thr526. A compositionally biased stretch (polar residues) spans 531 to 542 (LSLNANQNGSRS). A phosphoserine mark is found at Ser532 and Ser540. Residues Thr543 and Thr552 each carry the phosphothreonine modification. The segment covering 543–553 (TAKEAGRRETL) has biased composition (basic and acidic residues). 3 positions are modified to phosphoserine: Ser573, Ser576, and Ser586.

The protein belongs to the MAP65/ASE1 family. As to quaternary structure, forms dimer. Binds to MT, mostly with coaligned MT, both between parallel or antiparallel, forming thick bundles. Interacts with the alpha-tubulin subunit of the tubulin heterodimer. Bundles polymerized MT via the formation of 25-nm crossbridges at specific stages of the cell cycle (e.g. bundles microtubules in interphase, anaphase and telophase but does not bind microtubules in prophase or metaphase), at the plus-end, the minus-end, or along the entire length of MT, and along phragmoplast MT. Interacts with SH3P1 and MPK4. Post-translationally, basal phosphorylation at all stages of the cell cycle. MT-binding properties inhibited by hyperphosphorylation mediated by CDKs and/or MAPKs (e.g. ANP2, ANP3, MPK4 and MPK6) during prometaphase and metaphase. Expressed in all organs and tissues with the exception of sepals and anthers. Bound to subsets of microtubules in the cells of root epidermis, hypocotyl and cotyledons (at protein level).

It localises to the nucleus. The protein localises to the cytoplasm. It is found in the cytoskeleton. The protein resides in the spindle. Its subcellular location is the phragmoplast. It localises to the cell cortex. Microtubule-associated protein that bundle and stabilize adjacent microtubules (MT) of the cell cortex. Enhances MT nucleation. Can also bind to tubulin dimers and promotes their polymerization. Confers MT resistance to the drug propyzamide and cold conditions. Plays a role in the central spindle at anaphase to early cytokinesis but is not essential at the midline of the phragmoplast at later stages. Represses metaphase spindle organization and the transition to anaphase in dephosphorylated active form. Promotes the formation of a planar network of antiparallel microtubules. May be involved in stomatal movement modulation by regulating the dynamic and arrangement of cortical MT. The sequence is that of 65-kDa microtubule-associated protein 1 (MAP65-1) from Arabidopsis thaliana (Mouse-ear cress).